The primary structure comprises 781 residues: Homeobox protein SIX4 (781 aa).

Residues 1-10 (MSSSSPTGQI) are compositionally biased toward polar residues. Disordered stretches follow at residues 1 to 55 (MSSS…PLEP) and 270 to 321 (WFKN…GITN). Residue S2 is modified to N-acetylserine. Positions 223–282 (GEETVYCFKEKSRNALKELYKQNRYPSPAEKRHLAKITGLSLTQVSNWFKNRRQRDRNPS) form a DNA-binding region, homeobox. Composition is skewed to basic and acidic residues over residues 278-290 (DRNP…KSES) and 299-308 (ESSKGHEDLS). Phosphoserine is present on S640.

It belongs to the SIX/Sine oculis homeobox family. As to quaternary structure, interacts with EYA3; acts cooperatively with EYA3 to transactivate target genes through interaction and nuclear translocation of EYA3 protein.

The protein resides in the nucleus. It localises to the cytoplasm. Transcriptional regulator which can act as both a transcriptional repressor and activator by binding a DNA sequence on these target genes and is involved in processes like cell differentiation, cell migration and cell survival. Transactivates gene expression by binding a 5'-[CAT]A[CT][CT][CTG]GA[GAT]-3' motif present in the Trex site and a 5'-TCA[AG][AG]TTNC-3' motif present in the MEF3 site of the muscle-specific genes enhancer. Acts cooperatively with EYA proteins to transactivate their target genes through interaction and nuclear translocation of EYA protein. Acts synergistically with SIX1 to regulate target genes involved in formation of various organs, including muscle, kidney, gonad, ganglia, olfactory epithelium and cranial skeleton. Plays a role in several important steps of muscle development. Controls the genesis of hypaxial myogenic progenitors in the dermomyotome by transactivating PAX3 and the delamination and migration of the hypaxial precursors from the ventral lip to the limb buds through the transactivation of PAX3, MET and LBX1. Controls myoblast determination by transactivating MYF5, MYOD1 and MYF6. Controls somitic differentiation in myocyte through MYOG transactivation. Plays a role in synaptogenesis and sarcomere organization by participating in myofiber specialization during embryogenesis by activating fast muscle program in the primary myotome resulting in an up-regulation of fast muscle genes, including ATP2A1, MYL1 and TNNT3. Simultaneously, is also able to activate inhibitors of slow muscle genes, such as SOX6, HRASLS, and HDAC4, thereby restricting the activation of the slow muscle genes. During muscle regeneration, negatively regulates differentiation of muscle satellite cells through down-regulation of MYOG expression. During kidney development regulates the early stages of metanephros development and ureteric bud formation through regulation of GDNF, SALL1, PAX8 and PAX2 expression. Plays a role in gonad development by regulating both testis determination and size determination. In gonadal sex determination, transactivates ZFPM2 by binding a MEF3 consensus sequence, resulting in SRY up-regulation. In gonadal size determination, transactivates NR5A1 by binding a MEF3 consensus sequence resulting in gonadal precursor cell formation regulation. During olfactory development mediates the specification and patterning of olfactory placode through fibroblast growth factor and BMP4 signaling pathways and also regulates epithelial cell proliferation during placode formation. Promotes survival of sensory neurons during early trigeminal gangliogenesis. In the developing dorsal root ganglia, up-regulates SLC12A2 transcription. Regulates early thymus/parathyroid organogenesis through regulation of GCM2 and FOXN1 expression. Forms gustatory papillae during development of the tongue. Also plays a role during embryonic cranial skeleton morphogenesis. This Homo sapiens (Human) protein is Homeobox protein SIX4 (SIX4).